A 325-amino-acid chain; its full sequence is Tetraacyldisaccharide 4'-kinase (325 aa).

55 to 62 (TAGGNGKT) lines the ATP pocket.

Belongs to the LpxK family.

It carries out the reaction a lipid A disaccharide + ATP = a lipid IVA + ADP + H(+). It functions in the pathway glycolipid biosynthesis; lipid IV(A) biosynthesis; lipid IV(A) from (3R)-3-hydroxytetradecanoyl-[acyl-carrier-protein] and UDP-N-acetyl-alpha-D-glucosamine: step 6/6. Functionally, transfers the gamma-phosphate of ATP to the 4'-position of a tetraacyldisaccharide 1-phosphate intermediate (termed DS-1-P) to form tetraacyldisaccharide 1,4'-bis-phosphate (lipid IVA). The protein is Tetraacyldisaccharide 4'-kinase of Salmonella typhi.